Reading from the N-terminus, the 165-residue chain is CDP-archaeol synthase (165 aa).

The next 4 helical transmembrane spans lie at 41 to 61 (GLIC…WLVG), 72 to 92 (ILSV…KSFI), 103 to 123 (AWPV…TIIF), and 127 to 147 (WFFA…TPVL).

The protein belongs to the CDP-archaeol synthase family. Requires Mg(2+) as cofactor.

The protein localises to the cell membrane. The enzyme catalyses 2,3-bis-O-(geranylgeranyl)-sn-glycerol 1-phosphate + CTP + H(+) = CDP-2,3-bis-O-(geranylgeranyl)-sn-glycerol + diphosphate. The protein operates within membrane lipid metabolism; glycerophospholipid metabolism. Catalyzes the formation of CDP-2,3-bis-(O-geranylgeranyl)-sn-glycerol (CDP-archaeol) from 2,3-bis-(O-geranylgeranyl)-sn-glycerol 1-phosphate (DGGGP) and CTP. This reaction is the third ether-bond-formation step in the biosynthesis of archaeal membrane lipids. This chain is CDP-archaeol synthase, found in Methanoregula boonei (strain DSM 21154 / JCM 14090 / 6A8).